The sequence spans 616 residues: MAPRFSWSFATSWHALAILALWPVSTLAGDKSAADYYVRELPGLPKDSPPIKMHAGHIEVTPETNGNLFFWHFQNNHIANRQRTVVWLNGGPGCSSEDGALMEVGPYRVTKDNALTLNNGTWNEFANLLFVDNPVGTGFSYVDTNSYIHGLNAMATQFITFLEKFFALFPEYESDDLYFAGESYAGQHIPYIAKAILDRNKLKSRAETWKLSGLLIGNGWISPQDQSSAYLKFSLEKGLIEKGSDNAQQLQHMQRICDKEMSINPGHVDYPECESILNKILELTREGSGDQACINMYDVRLRDSAPSCGMNWPPDLKYVGPYLRQPQVISALNLDKQRNTGWQECNSMVNANFRNQNATASISLLPDILKEVPILLFSGAEDLICNHVGTEELISNLAWNEGKGFEVTPGNWAPRRQWTFEGEVAGFWQEARNLTYVLFHNASHMVPFDYPRRSRDMLDRFMKVDISSIGGQPSDSRIDGEKGPDTSVGGAKNNTQQHEEETKQKLNEAKWHAYQRSGEVVLVIVIIAASVWGYFVWRQRRKGAAYSALQNDEAAGQSRTGLAAFHDRQSDRDLEAAAFDETTVDNIPLQESIGRGESKYSIGDDSDEEEEGTTKT.

The first 28 residues, 1-28, serve as a signal peptide directing secretion; the sequence is MAPRFSWSFATSWHALAILALWPVSTLA. Residues 29 to 516 lie on the Lumenal side of the membrane; sequence GDKSAADYYV…NEAKWHAYQR (488 aa). Asn119 carries an N-linked (GlcNAc...) asparagine glycan. Ser183 is an active-site residue. Asn357 is a glycosylation site (N-linked (GlcNAc...) asparagine). The active site involves Asp382. N-linked (GlcNAc...) asparagine glycans are attached at residues Asn433 and Asn441. Residue His444 is part of the active site. The interval 468 to 504 is disordered; sequence SIGGQPSDSRIDGEKGPDTSVGGAKNNTQQHEEETKQ. The N-linked (GlcNAc...) asparagine glycan is linked to Asn493. A helical transmembrane segment spans residues 517-537; the sequence is SGEVVLVIVIIAASVWGYFVW. The Cytoplasmic portion of the chain corresponds to 538–616; that stretch reads RQRRKGAAYS…DEEEEGTTKT (79 aa). Residues 577–616 form a disordered region; sequence AAFDETTVDNIPLQESIGRGESKYSIGDDSDEEEEGTTKT. Acidic residues predominate over residues 604 to 616; the sequence is DDSDEEEEGTTKT.

It belongs to the peptidase S10 family.

It is found in the golgi apparatus. The protein resides in the trans-Golgi network membrane. The catalysed reaction is Preferential release of a C-terminal arginine or lysine residue.. Protease with a carboxypeptidase B-like function involved in the C-terminal processing of the lysine and arginine residues from protein precursors. Promotes cell fusion and is involved in the programmed cell death. The chain is Pheromone-processing carboxypeptidase KEX1 (KEX1) from Metarhizium acridum (strain CQMa 102).